Consider the following 213-residue polypeptide: Thiamine-phosphate synthase (213 aa).

Residues 40–44 (QFREK) and N75 contribute to the 4-amino-2-methyl-5-(diphosphooxymethyl)pyrimidine site. The Mg(2+) site is built by D76 and D95. Position 113 (S113) interacts with 4-amino-2-methyl-5-(diphosphooxymethyl)pyrimidine. 2-[(2R,5Z)-2-carboxy-4-methylthiazol-5(2H)-ylidene]ethyl phosphate is bound at residue 139 to 141 (TPS). 4-amino-2-methyl-5-(diphosphooxymethyl)pyrimidine is bound at residue K142. 2-[(2R,5Z)-2-carboxy-4-methylthiazol-5(2H)-ylidene]ethyl phosphate is bound by residues G171 and 191–192 (IS).

This sequence belongs to the thiamine-phosphate synthase family. Mg(2+) serves as cofactor.

The enzyme catalyses 2-[(2R,5Z)-2-carboxy-4-methylthiazol-5(2H)-ylidene]ethyl phosphate + 4-amino-2-methyl-5-(diphosphooxymethyl)pyrimidine + 2 H(+) = thiamine phosphate + CO2 + diphosphate. It carries out the reaction 2-(2-carboxy-4-methylthiazol-5-yl)ethyl phosphate + 4-amino-2-methyl-5-(diphosphooxymethyl)pyrimidine + 2 H(+) = thiamine phosphate + CO2 + diphosphate. The catalysed reaction is 4-methyl-5-(2-phosphooxyethyl)-thiazole + 4-amino-2-methyl-5-(diphosphooxymethyl)pyrimidine + H(+) = thiamine phosphate + diphosphate. Its pathway is cofactor biosynthesis; thiamine diphosphate biosynthesis; thiamine phosphate from 4-amino-2-methyl-5-diphosphomethylpyrimidine and 4-methyl-5-(2-phosphoethyl)-thiazole: step 1/1. Functionally, condenses 4-methyl-5-(beta-hydroxyethyl)thiazole monophosphate (THZ-P) and 2-methyl-4-amino-5-hydroxymethyl pyrimidine pyrophosphate (HMP-PP) to form thiamine monophosphate (TMP). This is Thiamine-phosphate synthase from Staphylococcus aureus (strain JH1).